The following is a 265-amino-acid chain: Mlc titration factor A (265 aa).

Positions 111, 148, 152, and 211 each coordinate Zn(2+).

Belongs to the MtfA family. In terms of assembly, interacts with Mlc. Zn(2+) is required as a cofactor.

Its subcellular location is the cytoplasm. Its function is as follows. Involved in the modulation of the activity of the glucose-phosphotransferase system (glucose-PTS). Interacts with the transcriptional repressor Mlc, preventing its interaction with DNA and leading to the modulation of expression of genes regulated by Mlc, including ptsG, which encodes the PTS system glucose-specific EIICB component. In terms of biological role, shows zinc-dependent metallopeptidase activity. This is Mlc titration factor A from Escherichia coli O139:H28 (strain E24377A / ETEC).